Here is a 642-residue protein sequence, read N- to C-terminus: Threonine--tRNA ligase (642 aa).

One can recognise a TGS domain in the interval 1 to 63; sequence MSTVTVTLPD…TADVELEIVT (63 aa). Residues 242–533 are catalytic; the sequence is DHRKIGQEMD…LTEHYNGKFP (292 aa). C334, H385, and H510 together coordinate Zn(2+).

The protein belongs to the class-II aminoacyl-tRNA synthetase family. Homodimer. It depends on Zn(2+) as a cofactor.

The protein resides in the cytoplasm. It carries out the reaction tRNA(Thr) + L-threonine + ATP = L-threonyl-tRNA(Thr) + AMP + diphosphate + H(+). In terms of biological role, catalyzes the attachment of threonine to tRNA(Thr) in a two-step reaction: L-threonine is first activated by ATP to form Thr-AMP and then transferred to the acceptor end of tRNA(Thr). The polypeptide is Threonine--tRNA ligase (Haloarcula marismortui (strain ATCC 43049 / DSM 3752 / JCM 8966 / VKM B-1809) (Halobacterium marismortui)).